Consider the following 282-residue polypeptide: Heterogeneous nuclear ribonucleoprotein C (282 aa).

The 72-residue stretch at 17 to 88 folds into the RRM domain; sequence SRVFIGNLNT…QVLDINLAAE (72 aa). Disordered stretches follow at residues 131–177 and 208–282; these read APPP…RLKG and QSKQ…EEDS. Residues 141–147 carry the Nuclear localization signal motif; sequence PSKRQRV. A compositionally biased stretch (low complexity) spans 161 to 172; that stretch reads SKSGQRGGSSKS. Positions 177–217 form a coiled coil; sequence GDDLQAIKKELSQIKQRVDSLLENLERIERDQSKQDTKLDD. Basic and acidic residues-rich tracts occupy residues 208 to 217 and 224 to 235; these read QSKQDTKLDD and LKKEETGVKLIE. Composition is skewed to acidic residues over residues 236-257 and 265-282; these read ETGDSAEEGDLLDDDEQGEDTL and KETEEGEDEGDSANEEDS.

The protein belongs to the RRM HNRPC family. RALY subfamily. In terms of assembly, tetramer.

The protein localises to the nucleus. In terms of biological role, binds pre-mRNA and nucleates the assembly of 40S hnRNP particles. Interacts with poly-U tracts in the 3'-UTR or 5'-UTR of mRNA and modulates the stability and the level of translation of bound mRNA molecules. Single HNRNPC tetramers bind 230-240 nucleotides. Trimers of HNRNPC tetramers bind 700 nucleotides. May play a role in the early steps of spliceosome assembly and pre-mRNA splicing. N6-methyladenosine (m6A) has been shown to alter the local structure in mRNAs and long non-coding RNAs (lncRNAs) via a mechanism named 'm(6)A-switch', facilitating binding of HNRNPC, leading to regulation of mRNA splicing. The polypeptide is Heterogeneous nuclear ribonucleoprotein C (hnrnpc) (Xenopus laevis (African clawed frog)).